Reading from the N-terminus, the 182-residue chain is NADH-quinone oxidoreductase subunit I (182 aa).

4Fe-4S ferredoxin-type domains are found at residues 52-82 and 92-121; these read LTRDPDGEERCVACNLCAVACPVGCISLQKA and EFFRINFSRCIFCGLCEEACPTTAIQLTPD. [4Fe-4S] cluster contacts are provided by C62, C65, C68, C72, C101, C104, C107, and C111.

This sequence belongs to the complex I 23 kDa subunit family. As to quaternary structure, NDH-1 is composed of 13 different subunits. Subunits NuoA, H, J, K, L, M, N constitute the membrane sector of the complex. [4Fe-4S] cluster is required as a cofactor.

It localises to the cell inner membrane. It catalyses the reaction a quinone + NADH + 5 H(+)(in) = a quinol + NAD(+) + 4 H(+)(out). Functionally, NDH-1 shuttles electrons from NADH, via FMN and iron-sulfur (Fe-S) centers, to quinones in the respiratory chain. The immediate electron acceptor for the enzyme in this species is believed to be ubiquinone. Couples the redox reaction to proton translocation (for every two electrons transferred, four hydrogen ions are translocated across the cytoplasmic membrane), and thus conserves the redox energy in a proton gradient. The protein is NADH-quinone oxidoreductase subunit I of Pseudomonas putida (strain ATCC 47054 / DSM 6125 / CFBP 8728 / NCIMB 11950 / KT2440).